Consider the following 518-residue polypeptide: Glutamate--cysteine ligase (518 aa).

It belongs to the glutamate--cysteine ligase type 1 family. Type 1 subfamily.

The catalysed reaction is L-cysteine + L-glutamate + ATP = gamma-L-glutamyl-L-cysteine + ADP + phosphate + H(+). It participates in sulfur metabolism; glutathione biosynthesis; glutathione from L-cysteine and L-glutamate: step 1/2. The polypeptide is Glutamate--cysteine ligase (Citrobacter koseri (strain ATCC BAA-895 / CDC 4225-83 / SGSC4696)).